A 346-amino-acid chain; its full sequence is Protease inhibitor Egf1.5b (346 aa).

A signal peptide spans 1–28 (MYIDTGIMSNNIFLFAFFALVGLTRIEA). One can recognise a TIL domain in the interval 52-104 (CRENEHYNSTRIECEDECNDRNNKLCYRFQQFCWCNEGYIRNSSHICVKLEDC).

The protein belongs to the polydnaviridae EGF-like motif protein family. In terms of assembly, interacts with host PAP1, PAP3 and SPH2.

Functionally, counteracts the host humoral immune response by inhibiting the processing and the amidolytic activity of host PAP1 and PAP3. Thereby, melanization of host hemolymph, normally producing several reactive intermediates toxic for viruses, is deregulated and proper immune response cannot occur. This Microplitis demolitor (Parasitoid wasp) protein is Protease inhibitor Egf1.5b (O5).